Consider the following 60-residue polypeptide: Movement protein TGBp3 (60 aa).

At 1–6 (MHYIDW) the chain is on the lumenal side. A helical membrane pass occupies residues 7–23 (VILLTFAAALIVCLTPK). Topologically, residues 24–60 (PEPCIITVSGASATVSNCPNPELLTDLVKALKPAKPV) are cytoplasmic.

It belongs to the Tymovirales TGBp3 protein family.

Its subcellular location is the host endoplasmic reticulum membrane. In terms of biological role, plays a role in viral cell-to-cell propagation, by facilitating genome transport to neighboring plant cells through plasmosdesmata. May induce the formation of granular vesicles derived from the Endoplasmic reticulum, which align on actin filaments. In Citrus (ICRSV), this protein is Movement protein TGBp3.